Here is a 396-residue protein sequence, read N- to C-terminus: DNA dC-&gt;dU-editing enzyme APOBEC3 (396 aa).

CMP/dCMP-type deaminase domains lie at G38 to A154 and E205 to L324. Residue H71 participates in Zn(2+) binding. E73 (proton donor) is an active-site residue. The Zn(2+) site is built by C105, C108, H255, C283, and C286.

Belongs to the cytidine and deoxycytidylate deaminase family. Homodimer. It depends on Zn(2+) as a cofactor.

It is found in the cytoplasm. The enzyme catalyses a 2'-deoxycytidine in single-stranded DNA + H2O + H(+) = a 2'-deoxyuridine in single-stranded DNA + NH4(+). Its function is as follows. DNA deaminase (cytidine deaminase) which acts as an inhibitor of retrovirus replication and retrotransposon mobility via deaminase-dependent and -independent mechanisms. Selectively targets single-stranded DNA and does not deaminate double-stranded DNA or single- or double-stranded RNA. This chain is DNA dC-&gt;dU-editing enzyme APOBEC3 (APOBEC3), found in Cricetulus longicaudatus (Long-tailed dwarf hamster).